The following is a 293-amino-acid chain: 3-methyl-2-oxobutanoate hydroxymethyltransferase (293 aa).

Positions 1–26 (MTQAPVTAGTPYGTIPPASPLPQRRP) are disordered. Mg(2+) is bound by residues Asp-68 and Asp-111. 3-methyl-2-oxobutanoate is bound by residues 68–69 (DS), Asp-111, and Lys-140. Mg(2+) is bound at residue Glu-142. Glu-209 (proton acceptor) is an active-site residue.

This sequence belongs to the PanB family. In terms of assembly, homodecamer; pentamer of dimers. The cofactor is Mg(2+).

The protein localises to the cytoplasm. It catalyses the reaction 3-methyl-2-oxobutanoate + (6R)-5,10-methylene-5,6,7,8-tetrahydrofolate + H2O = 2-dehydropantoate + (6S)-5,6,7,8-tetrahydrofolate. The protein operates within cofactor biosynthesis; (R)-pantothenate biosynthesis; (R)-pantoate from 3-methyl-2-oxobutanoate: step 1/2. Functionally, catalyzes the reversible reaction in which hydroxymethyl group from 5,10-methylenetetrahydrofolate is transferred onto alpha-ketoisovalerate to form ketopantoate. In Delftia acidovorans (strain DSM 14801 / SPH-1), this protein is 3-methyl-2-oxobutanoate hydroxymethyltransferase.